The primary structure comprises 173 residues: Bifunctional protein PyrR (173 aa).

Substrate contacts are provided by residues T40–R41, D97–T105, and R130. A PRPP-binding motif is present at residues V93–T105.

It belongs to the purine/pyrimidine phosphoribosyltransferase family. PyrR subfamily. In terms of assembly, homodimer and homohexamer; in equilibrium.

The enzyme catalyses UMP + diphosphate = 5-phospho-alpha-D-ribose 1-diphosphate + uracil. Functionally, regulates transcriptional attenuation of the pyrimidine nucleotide (pyr) operon by binding in a uridine-dependent manner to specific sites on pyr mRNA. This disrupts an antiterminator hairpin in the RNA and favors formation of a downstream transcription terminator, leading to a reduced expression of downstream genes. Its function is as follows. Also displays a weak uracil phosphoribosyltransferase activity which is not physiologically significant. This chain is Bifunctional protein PyrR, found in Streptococcus pyogenes serotype M6 (strain ATCC BAA-946 / MGAS10394).